We begin with the raw amino-acid sequence, 477 residues long: UDP-sulfoquinovose synthase, chloroplastic (477 aa).

Residues Met1–Lys21 are disordered. Residues Met1–Arg86 constitute a chloroplast transit peptide. Residues Tyr95–Cys96, Asp115–Arg119, Asp158–Ile159, Arg184, and Asn202 contribute to the NAD(+) site. Arg184 is a substrate binding site. 2 residues coordinate substrate: Thr228 and Tyr265. Residue Thr228 is part of the active site. Residues Tyr265 and Lys269 each coordinate NAD(+). Tyr265 (proton acceptor) is an active-site residue. Lys269 is an active-site residue. Gln292 is a substrate binding site. Val295 provides a ligand contact to NAD(+). Residues Ala322–Arg325, Thr337–Tyr339, and Arg410–Glu412 each bind substrate.

It belongs to the NAD(P)-dependent epimerase/dehydratase family. As to quaternary structure, homodimer. It depends on NAD(+) as a cofactor.

Its subcellular location is the plastid. It is found in the chloroplast. It catalyses the reaction sulfite + UDP-alpha-D-glucose + H(+) = UDP-alpha-D-6-sulfoquinovose + H2O. With respect to regulation, concentrations above 100 uM sulfite inhibit the reaction. In terms of biological role, involved in the biosynthesis of sulfolipids found in thylakoid membranes. Converts UDP-glucose and sulfite to the sulfolipid head group precursor UDP-sulfoquinovose. This chain is UDP-sulfoquinovose synthase, chloroplastic (SQD1), found in Arabidopsis thaliana (Mouse-ear cress).